The primary structure comprises 424 residues: Inhibin beta A chain (424 aa).

A signal peptide spans 1–20 (MPLLWLRGFLLASCWIIVRS). Positions 21-308 (SPTPGSEGHG…EDHPHRRRRR (288 aa)) are excised as a propeptide. An N-linked (GlcNAc...) asparagine glycan is attached at Asn165. Residues 264–275 (EVDGDGKKKDGS) are compositionally biased toward basic and acidic residues. The tract at residues 264 to 306 (EVDGDGKKKDGSDGGLEEEKEQSHRPFLMLQARQSEDHPHRRR) is disordered. 4 disulfide bridges follow: Cys312–Cys320, Cys319–Cys389, Cys348–Cys421, and Cys352–Cys423.

The protein belongs to the TGF-beta family. As to quaternary structure, dimeric, linked by one or more disulfide bonds. Inhibin A is a dimer of alpha/INHA and beta-A/INHBA. Activin A is a homodimer of beta-A/INHBA. Activin AB is a dimer of beta-A/INHBA and beta-B/INHBB. Interacts with FST and FSTL3; these interactions prevent activin A interaction to its type II receptor. Activin A interacts with ACVR2A. Activin A interacts with BMPR2. Inhibin A interacts with ACVR1; this interaction creates a non-signaling complex (NSC) that inhibits ACVR1-mediated BMP signaling. Inhibin A interacts with ACVR2A.

The protein localises to the secreted. Functionally, inhibins/activins are involved in regulating a number of diverse functions such as hypothalamic and pituitary hormone secretion, gonadal hormone secretion, germ cell development and maturation, erythroid differentiation, insulin secretion, nerve cell survival, embryonic axial development or bone growth, depending on their subunit composition. Its function is as follows. Activin A is a homodimer of INHBA that plays a role in several essential biological processes including embryonic development, stem cell maintenance and differentiation, haematopoiesis, cell proliferation and tissue fibrosis. Signals through type I (such as ACVR1B or ACVR1C) and type II receptors (such as ACVR2A, ACVR2B or BMPR2) which, upon ligand binding, phosphorylate SMAD2 and SMAD3 intracellular signaling mediators that form a complex with SMAD4, translocate to the nucleus and modulate gene expression. Can also activate alternative non-canonical intracellular signaling pathways including the p38 MAPK, extracellular signal-regulated kinases 1/2 (ERK1/2) and c-Jun N-terminal kinases (JNKs) to modulate cell migration and differentiation. Alternatively, promotes osteoblastic differentiation via ACVRL1-SMAD1/5/9 pathway. In addition, can engage the type I receptor ACVR1 to form an ACVR1-activin A-type II receptor non-signaling complex (NSC) that renders receptors unavailable for engagement with BMPs, hence resulting in an apparent inhibition of ACVR1-mediated BMP signaling. In terms of biological role, inhibin A is a dimer of alpha/INHA and beta-A/INHBA that functions as a feedback regulator in the hypothalamic-pituitary-gonadal (HPG) axis. Inhibits the secretion of FSH from the anterior pituitary gland by acting on pituitary gonadotrope cells. Antagonizes activin A by binding to the proteoglycan, betaglycan, and forming a stable complex with and, thereby, sequestering type II activin receptors while excluding type I receptor. The sequence is that of Inhibin beta A chain (Inhba) from Rattus norvegicus (Rat).